Reading from the N-terminus, the 239-residue chain is Large ribosomal subunit protein uL2 (239 aa).

A disordered region spans residues 200–239; that stretch reads VNHPHGGKEHHIGRPSTVSRRAPPGRKVGHIAARRTGRRK. Basic residues predominate over residues 222–239; it reads PPGRKVGHIAARRTGRRK.

This sequence belongs to the universal ribosomal protein uL2 family. Part of the 50S ribosomal subunit. Forms a bridge to the 30S subunit in the 70S ribosome.

Its function is as follows. One of the primary rRNA binding proteins. Required for association of the 30S and 50S subunits to form the 70S ribosome, for tRNA binding and peptide bond formation. It has been suggested to have peptidyltransferase activity; this is somewhat controversial. Makes several contacts with the 16S rRNA in the 70S ribosome. This chain is Large ribosomal subunit protein uL2, found in Thermococcus kodakarensis (strain ATCC BAA-918 / JCM 12380 / KOD1) (Pyrococcus kodakaraensis (strain KOD1)).